The following is a 151-amino-acid chain: Cell division protein SepF (151 aa).

The interval 31–53 (EEVEEPRRRSRTGVKQERETGQN) is disordered.

It belongs to the SepF family. In terms of assembly, homodimer. Interacts with FtsZ.

Its subcellular location is the cytoplasm. Cell division protein that is part of the divisome complex and is recruited early to the Z-ring. Probably stimulates Z-ring formation, perhaps through the cross-linking of FtsZ protofilaments. Its function overlaps with FtsA. In Halalkalibacterium halodurans (strain ATCC BAA-125 / DSM 18197 / FERM 7344 / JCM 9153 / C-125) (Bacillus halodurans), this protein is Cell division protein SepF.